We begin with the raw amino-acid sequence, 427 residues long: 3-phosphoshikimate 1-carboxyvinyltransferase (427 aa).

Residues Lys22, Ser23, and Arg27 each coordinate 3-phosphoshikimate. Residue Lys22 participates in phosphoenolpyruvate binding. 2 residues coordinate phosphoenolpyruvate: Gly96 and Arg124. Ser169, Ser170, Gln171, Ser197, Asp313, Asn336, and Lys340 together coordinate 3-phosphoshikimate. Gln171 contacts phosphoenolpyruvate. Asp313 functions as the Proton acceptor in the catalytic mechanism. Phosphoenolpyruvate is bound by residues Arg344, Arg386, and Lys411.

It belongs to the EPSP synthase family. In terms of assembly, monomer.

Its subcellular location is the cytoplasm. The enzyme catalyses 3-phosphoshikimate + phosphoenolpyruvate = 5-O-(1-carboxyvinyl)-3-phosphoshikimate + phosphate. It participates in metabolic intermediate biosynthesis; chorismate biosynthesis; chorismate from D-erythrose 4-phosphate and phosphoenolpyruvate: step 6/7. Catalyzes the transfer of the enolpyruvyl moiety of phosphoenolpyruvate (PEP) to the 5-hydroxyl of shikimate-3-phosphate (S3P) to produce enolpyruvyl shikimate-3-phosphate and inorganic phosphate. The sequence is that of 3-phosphoshikimate 1-carboxyvinyltransferase from Salmonella typhimurium (strain LT2 / SGSC1412 / ATCC 700720).